The sequence spans 284 residues: 2-dehydro-3-deoxyphosphooctonate aldolase (284 aa).

It belongs to the KdsA family.

It localises to the cytoplasm. It catalyses the reaction D-arabinose 5-phosphate + phosphoenolpyruvate + H2O = 3-deoxy-alpha-D-manno-2-octulosonate-8-phosphate + phosphate. The protein operates within carbohydrate biosynthesis; 3-deoxy-D-manno-octulosonate biosynthesis; 3-deoxy-D-manno-octulosonate from D-ribulose 5-phosphate: step 2/3. Its pathway is bacterial outer membrane biogenesis; lipopolysaccharide biosynthesis. This chain is 2-dehydro-3-deoxyphosphooctonate aldolase (kdsA), found in Haemophilus influenzae (strain ATCC 51907 / DSM 11121 / KW20 / Rd).